The following is a 204-amino-acid chain: Thymidine kinase (204 aa).

ATP contacts are provided by residues 23-30 (GSMFSGKT) and 95-98 (DEAQ). The active-site Proton acceptor is the Glu96. The Zn(2+) site is built by Cys152, Cys155, Cys184, and Cys187.

The protein belongs to the thymidine kinase family. Homotetramer.

The protein resides in the cytoplasm. The enzyme catalyses thymidine + ATP = dTMP + ADP + H(+). The sequence is that of Thymidine kinase from Porphyromonas gingivalis (strain ATCC 33277 / DSM 20709 / CIP 103683 / JCM 12257 / NCTC 11834 / 2561).